The following is a 101-amino-acid chain: Small ribosomal subunit protein uS14 (101 aa).

The protein belongs to the universal ribosomal protein uS14 family. Part of the 30S ribosomal subunit. Contacts proteins S3 and S10.

Its function is as follows. Binds 16S rRNA, required for the assembly of 30S particles and may also be responsible for determining the conformation of the 16S rRNA at the A site. This is Small ribosomal subunit protein uS14 from Methylibium petroleiphilum (strain ATCC BAA-1232 / LMG 22953 / PM1).